Here is a 71-residue protein sequence, read N- to C-terminus: UPF0346 protein BCB4264_A2283 (71 aa).

It belongs to the UPF0346 family.

The sequence is that of UPF0346 protein BCB4264_A2283 from Bacillus cereus (strain B4264).